The sequence spans 833 residues: Heat shock transcription factor (833 aa).

Met1 carries the post-translational modification N-acetylmethionine. The segment covering 1 to 16 (MNNAANTGTTNESNVS) has biased composition (polar residues). Disordered stretches follow at residues 1-31 (MNNA…NDDD) and 62-92 (NPSL…STHL). The segment covering 69–80 (SAASPVPSSSFF) has biased composition (low complexity). A Phosphothreonine modification is found at Thr97. Over residues 150–161 (PSSGTTNAQPRQ) the composition is skewed to polar residues. 2 disordered regions span residues 150–170 (PSSG…QSHK) and 277–309 (GSSN…NNSN). The DNA-binding element occupies 170 to 259 (KSRPAFVNKL…SDDKWQFENE (90 aa)). The interval 260–280 (NFIRGREDLLEKIIRQKGSSN) is flexible linker. Over residues 277 to 296 (GSSNNHNSPSGNGNPANGSN) the composition is skewed to low complexity. The involved in trimerization stretch occupies residues 350–403 (ELEQIKYNQIAISKDLLRINKDNELLWQENMMARERHRTQQQALEKMFRFLTSI). Residues 447–457 (SNDSFINDDRN) show a composition bias toward basic and acidic residues. The segment at 447–493 (SNDSFINDDRNSFTNATTNARNNMSPNNDDNSIDTASTNTTNRKKNI) is disordered. Residues Ser450, Ser458, Ser471, Ser478, and Ser528 each carry the phosphoserine modification. Residues 458 to 487 (SFTNATTNARNNMSPNNDDNSIDTASTNTT) show a composition bias toward polar residues. Polar residues predominate over residues 542–554 (RANSSTSSENPSL). Disordered stretches follow at residues 542–626 (RANS…HNES), 657–765 (GYPN…RVSP), and 778–799 (SDNL…APEN). Positions 571–580 (PFDDEEEEET) are enriched in acidic residues. Residues 588-600 (RDPNNQTSENTFD) show a composition bias toward polar residues. Positions 610–626 (DDLKKDSHTNDNKHNES) are enriched in basic and acidic residues. Low complexity predominate over residues 660–675 (NKSFNNKTSSTNTNSN). Residues 676 to 687 (MESAVNVNSPGF) are compositionally biased toward polar residues. Positions 697–713 (SNSPNSVHSVPSNGSGS) are enriched in low complexity. Composition is skewed to polar residues over residues 727–739 (ASTS…NGSG), 752–763 (NDNNTSEGSTRV), and 778–794 (SDNL…TQAD).

This sequence belongs to the HSF family. Homotrimer. Homotrimerization increases the affinity of HSF1 to DNA. In terms of processing, exhibits temperature-dependent phosphorylation that activates the transcriptional capacity.

The protein localises to the nucleus. Its function is as follows. DNA-binding transcription factor that specifically binds heat shock promoter elements (HSE) and activates transcription. This chain is Heat shock transcription factor, found in Saccharomyces cerevisiae (strain ATCC 204508 / S288c) (Baker's yeast).